A 24-amino-acid chain; its full sequence is DQAAGVAAIIEIDNIFSESEVISK.

The sequence is that of Unknown protein 6 from Lonomia obliqua (Moth).